We begin with the raw amino-acid sequence, 182 residues long: Probable pyruvoyl-dependent arginine decarboxylase (182 aa).

Ser43 bears the Pyruvic acid (Ser) mark.

Belongs to the PdaD family. The cofactor is pyruvate.

It catalyses the reaction L-arginine + H(+) = agmatine + CO2. This chain is Probable pyruvoyl-dependent arginine decarboxylase, found in Chloroherpeton thalassium (strain ATCC 35110 / GB-78).